The chain runs to 403 residues: Ribosomal RNA large subunit methyltransferase I (403 aa).

The PUA domain occupies 9 to 86 (YPRLVLSKGR…KAESIDIAFF (78 aa)).

It belongs to the methyltransferase superfamily. RlmI family.

Its subcellular location is the cytoplasm. It carries out the reaction cytidine(1962) in 23S rRNA + S-adenosyl-L-methionine = 5-methylcytidine(1962) in 23S rRNA + S-adenosyl-L-homocysteine + H(+). In terms of biological role, specifically methylates the cytosine at position 1962 (m5C1962) of 23S rRNA. The protein is Ribosomal RNA large subunit methyltransferase I of Salmonella gallinarum (strain 287/91 / NCTC 13346).